We begin with the raw amino-acid sequence, 120 residues long: Acyl carrier protein, mitochondrial (120 aa).

Positions 43–117 constitute a Carrier domain; sequence KEITDRVIGV…ETISYLRKTP (75 aa). S77 carries the O-(pantetheine 4'-phosphoryl)serine modification.

The protein belongs to the acyl carrier protein (ACP) family. As to quaternary structure, complex I is composed of about 45 different subunits. Post-translationally, 4'-phosphopantetheine is transferred from CoA to a specific serine of apo-ACP by acpS. This modification is essential for activity because fatty acids are bound in thioester linkage to the sulfhydryl of the prosthetic group.

Its subcellular location is the mitochondrion. It participates in lipid metabolism; fatty acid biosynthesis. Carrier of the growing fatty acid chain in fatty acid biosynthesis. May be involved in the synthesis of very-long-chain fatty acids. Accessory and non-catalytic subunit of the mitochondrial membrane respiratory chain NADH dehydrogenase (Complex I), which functions in the transfer of electrons from NADH to the respiratory chain. This is Acyl carrier protein, mitochondrial (ndufab1) from Dictyostelium discoideum (Social amoeba).